Consider the following 457-residue polypeptide: tRNA-2-methylthio-N(6)-dimethylallyladenosine synthase (457 aa).

The MTTase N-terminal domain occupies 3-120 (KKVYVKTFGC…LPQMIDARRE (118 aa)). [4Fe-4S] cluster contacts are provided by C12, C49, C83, C157, C161, and C164. A Radical SAM core domain is found at 143 to 377 (RVEGPSAFVS…QATIEENVAR (235 aa)). A TRAM domain is found at 380-447 (QSMLGKVERI…PHSLRGELVL (68 aa)).

It belongs to the methylthiotransferase family. MiaB subfamily. In terms of assembly, monomer. Requires [4Fe-4S] cluster as cofactor.

It is found in the cytoplasm. The enzyme catalyses N(6)-dimethylallyladenosine(37) in tRNA + (sulfur carrier)-SH + AH2 + 2 S-adenosyl-L-methionine = 2-methylsulfanyl-N(6)-dimethylallyladenosine(37) in tRNA + (sulfur carrier)-H + 5'-deoxyadenosine + L-methionine + A + S-adenosyl-L-homocysteine + 2 H(+). Its function is as follows. Catalyzes the methylthiolation of N6-(dimethylallyl)adenosine (i(6)A), leading to the formation of 2-methylthio-N6-(dimethylallyl)adenosine (ms(2)i(6)A) at position 37 in tRNAs that read codons beginning with uridine. The sequence is that of tRNA-2-methylthio-N(6)-dimethylallyladenosine synthase from Burkholderia pseudomallei (strain 1710b).